The sequence spans 150 residues: Cell division protein SepF (150 aa).

This sequence belongs to the SepF family. As to quaternary structure, homodimer. Interacts with FtsZ.

It localises to the cytoplasm. Functionally, cell division protein that is part of the divisome complex and is recruited early to the Z-ring. Probably stimulates Z-ring formation, perhaps through the cross-linking of FtsZ protofilaments. Its function overlaps with FtsA. The protein is Cell division protein SepF of Clostridium beijerinckii (strain ATCC 51743 / NCIMB 8052) (Clostridium acetobutylicum).